The chain runs to 326 residues: Serine protease 38 (326 aa).

An N-terminal signal peptide occupies residues 1–32 (MAAPASVMGPLGPSALGLLLLLLVVAPPRVAA). Positions 33–59 (LVHRQPENQGISLTGSVACGRPSMEGK) are cleaved as a propeptide — activation peptide. The 234-residue stretch at 60 to 293 (ILGGVPAPER…FSKWICDNIE (234 aa)) folds into the Peptidase S1 domain. Residues Cys85 and Cys101 are joined by a disulfide bond. His100 serves as the catalytic Charge relay system. N-linked (GlcNAc...) asparagine glycosylation occurs at Asn125. The active-site Charge relay system is Asp150. 3 disulfide bridges follow: Cys183/Cys251, Cys214/Cys230, and Cys241/Cys269. The Charge relay system role is filled by Ser245.

The protein belongs to the peptidase S1 family.

The protein resides in the secreted. In Homo sapiens (Human), this protein is Serine protease 38 (PRSS38).